The chain runs to 379 residues: UDP-N-acetylglucosamine--N-acetylmuramyl-(pentapeptide) pyrophosphoryl-undecaprenol N-acetylglucosamine transferase (379 aa).

UDP-N-acetyl-alpha-D-glucosamine contacts are provided by residues 13 to 15 (TGG), N123, R166, S194, and Q295.

Belongs to the glycosyltransferase 28 family. MurG subfamily.

The protein localises to the cell inner membrane. The catalysed reaction is di-trans,octa-cis-undecaprenyl diphospho-N-acetyl-alpha-D-muramoyl-L-alanyl-D-glutamyl-meso-2,6-diaminopimeloyl-D-alanyl-D-alanine + UDP-N-acetyl-alpha-D-glucosamine = di-trans,octa-cis-undecaprenyl diphospho-[N-acetyl-alpha-D-glucosaminyl-(1-&gt;4)]-N-acetyl-alpha-D-muramoyl-L-alanyl-D-glutamyl-meso-2,6-diaminopimeloyl-D-alanyl-D-alanine + UDP + H(+). It participates in cell wall biogenesis; peptidoglycan biosynthesis. Cell wall formation. Catalyzes the transfer of a GlcNAc subunit on undecaprenyl-pyrophosphoryl-MurNAc-pentapeptide (lipid intermediate I) to form undecaprenyl-pyrophosphoryl-MurNAc-(pentapeptide)GlcNAc (lipid intermediate II). The polypeptide is UDP-N-acetylglucosamine--N-acetylmuramyl-(pentapeptide) pyrophosphoryl-undecaprenol N-acetylglucosamine transferase (Rhodospirillum centenum (strain ATCC 51521 / SW)).